A 137-amino-acid chain; its full sequence is Small ribosomal subunit protein bS6 (137 aa).

The interval leucine 99–glutamate 137 is disordered. Residues alanine 105–glutamine 129 are compositionally biased toward basic and acidic residues.

This sequence belongs to the bacterial ribosomal protein bS6 family.

Its function is as follows. Binds together with bS18 to 16S ribosomal RNA. The protein is Small ribosomal subunit protein bS6 of Marinobacter nauticus (strain ATCC 700491 / DSM 11845 / VT8) (Marinobacter aquaeolei).